Here is a 401-residue protein sequence, read N- to C-terminus: S-adenosylmethionine synthase (401 aa).

Histidine 16 contributes to the ATP binding site. Aspartate 18 lines the Mg(2+) pocket. Glutamate 44 provides a ligand contact to K(+). Positions 57 and 109 each coordinate L-methionine. The flexible loop stretch occupies residues 109-119; sequence QSAHIAQGVDA. Residues 174–176, aspartate 251, 257–258, alanine 274, and lysine 278 contribute to the ATP site; these read DAK and RK. Position 251 (aspartate 251) interacts with L-methionine. Residue lysine 282 coordinates L-methionine.

The protein belongs to the AdoMet synthase family. As to quaternary structure, homotetramer; dimer of dimers. The cofactor is Mg(2+). It depends on K(+) as a cofactor.

It is found in the cytoplasm. It carries out the reaction L-methionine + ATP + H2O = S-adenosyl-L-methionine + phosphate + diphosphate. The protein operates within amino-acid biosynthesis; S-adenosyl-L-methionine biosynthesis; S-adenosyl-L-methionine from L-methionine: step 1/1. Functionally, catalyzes the formation of S-adenosylmethionine (AdoMet) from methionine and ATP. The overall synthetic reaction is composed of two sequential steps, AdoMet formation and the subsequent tripolyphosphate hydrolysis which occurs prior to release of AdoMet from the enzyme. The polypeptide is S-adenosylmethionine synthase (Novosphingobium aromaticivorans (strain ATCC 700278 / DSM 12444 / CCUG 56034 / CIP 105152 / NBRC 16084 / F199)).